Consider the following 117-residue polypeptide: Immunoglobulin lambda variable 2 (117 aa).

The N-terminal stretch at 1 to 19 (MAWTSLILSLLALCSGASS) is a signal peptide. Position 20 is a pyrrolidone carboxylic acid (Q20). The region spanning 20–117 (QAVVTQESAL…FCALWYSTHF (98 aa)) is the Ig-like domain.

This Mus musculus (Mouse) protein is Immunoglobulin lambda variable 2.